The following is a 371-amino-acid chain: MPAQIKKYKAAAVQAEPGWFDLELSVKKTIHWINEAGKAGCKLVAFPEVWIPGYPYWAWKVNYQQSLPMLKAYRENSLASDSDEMRRIREAARENAIYVSLGYSEIDFATLYISQVLISPTGEVLNHRRKIKPTHVEKLVYGDGAGDTFKSVVQTDIGRVGQLNCWENMNPFLKAMNVSEGEQVHIAGWPIYPHEETRTPLDPWTNTSNPNSDIVSPAYAIETATYVLAPFQRISKEGVDKCTPPGVEREDHNLYNGNSRIFGPDGQCLAKADEEFEGLMFVEIDLDQSHLPKALGDFGGHYMRPDLIRLLVDTRRKELITEADQDGGIGTYNTQDRVGLNRPLDAPKVDGPSGVSKQVLLSNAKKAAHKG.

Residues 8–286 (YKAAAVQAEP…EGLMFVEIDL (279 aa)) form the CN hydrolase domain. E48 acts as the Proton acceptor in catalysis. The active site involves K130. C165 serves as the catalytic Nucleophile. The interval 326–356 (DGGIGTYNTQDRVGLNRPLDAPKVDGPSGVS) is disordered.

This sequence belongs to the carbon-nitrogen hydrolase superfamily. Nitrilase family. Oligomer of dimers, forming left-handed helical fibers.

It catalyses the reaction formamide = hydrogen cyanide + H2O. Functionally, catalyzes the hydration of cyanide to formamide. Degradation of cyanide may be important for plant pathogenic fungi in infection of cyanogenic plants. Can also transform some nitriles like 2-cyanopyridine and fumaronitrile and has a minor activity with 4-cyanophenyl acetonitrile (4-CPA). The polypeptide is Cyanide hydratase (Botryotinia fuckeliana (strain T4) (Noble rot fungus)).